Here is a 311-residue protein sequence, read N- to C-terminus: Long form salivary protein D7L1 (311 aa).

Positions 1–21 are cleaved as a signal peptide; it reads MIVTGVLLFILLELFAQGSQA. Cystine bridges form between Cys37–Cys73, Cys69–Cys128, Cys178–Cys211, and Cys252–Cys263.

This sequence belongs to the PBP/GOBP family.

It localises to the secreted. Functionally, modulates blood feeding of female mosquitoes on vertebrate species by binding and sequestering different mediators involved in the host response. Binds leukotriene C4 and U-46619, a stable analog of thromboxane A2. Inhibits agonist-induced platelet aggregation. Exhibits vasodilating activity. This Anopheles gambiae (African malaria mosquito) protein is Long form salivary protein D7L1.